Consider the following 42-residue polypeptide: Daisho1 (42 aa).

Positions 1-20 are cleaved as a signal peptide; sequence MKFFQAAALLLAMFAALANA. Positions 21–26 are cleaved as a propeptide — removed by a dipeptidylpeptidase; that stretch reads EPVPQP. Threonine amide is present on T41.

Hemolymph (at protein level).

The protein resides in the secreted. Functionally, peptide which plays a role in the humoral immune response to a subset of filamentous fungi, including F.oxysporum and F.verticillioides. The protein is Daisho1 of Drosophila melanogaster (Fruit fly).